The primary structure comprises 144 residues: UPF0292 protein MA_4098 (144 aa).

Residues 28–109 (GAVIIVEGKR…KPELQIRNKL (82 aa)) enclose the Toprim domain. Glu34, Asp78, and Asp80 together coordinate Mg(2+).

This sequence belongs to the UPF0292 family. Mg(2+) serves as cofactor.

The sequence is that of UPF0292 protein MA_4098 from Methanosarcina acetivorans (strain ATCC 35395 / DSM 2834 / JCM 12185 / C2A).